The following is a 435-amino-acid chain: AP-2 complex subunit mu (435 aa).

Ser-45 carries the phosphoserine modification. Position 156 is a phosphothreonine (Thr-156). Positions 170–434 constitute an MHD domain; that stretch reads RNELFLDVLE…IGRSGIYETR (265 aa). A 1,2-diacyl-sn-glycero-3-phospho-(1D-myo-inositol-3,4,5-trisphosphate)-binding residues include Lys-341, Lys-345, and Lys-354.

Belongs to the adaptor complexes medium subunit family. In terms of assembly, adaptor protein complex 2 (AP-2) is a heterotetramer composed of two large adaptins (alpha-type subunit AP2A1 or AP2A2 and beta-type subunit AP2B1), a medium adaptin (mu-type subunit AP2M1) and a small adaptin (sigma-type subunit AP2S1). Interacts with ATP6V1H and MEGF10. Interacts with EGFR and TTGN1. Interacts with F2R. Interacts with PIP5K1C; tyrosine phosphorylation of PIP5K1C weakens the interaction. Interacts with KIAA0319; required for clathrin-mediated endocytosis of KIAA0319. Interacts with DVL2 (via DEP domain). Interacts with KCNQ1; mediates estrogen-induced internalization via clathrin-coated vesicles. Interacts with P2RX4 (via internalization motif). Together with AP2A1 or AP2A2 and AP2B1, it interacts with ADAM10; this interaction facilitates ADAM10 endocytosis from the plasma membrane during long-term potentiation in hippocampal neurons. Probably interacts with ACE2 (via endocytic sorting signal motif); the interaction is inhibited by ACE2 phosphorylation. Interacts with RALBP1; the interaction is direct. Interacts with TMEM106B (via N-terminus). Phosphorylation at Thr-156 increases the affinity of the AP-2 complex for cargo membrane proteins during the initial stages of endocytosis.

It localises to the cell membrane. Its subcellular location is the membrane. The protein localises to the coated pit. Component of the adaptor protein complex 2 (AP-2). Adaptor protein complexes function in protein transport via transport vesicles in different membrane traffic pathways. Adaptor protein complexes are vesicle coat components and appear to be involved in cargo selection and vesicle formation. AP-2 is involved in clathrin-dependent endocytosis in which cargo proteins are incorporated into vesicles surrounded by clathrin (clathrin-coated vesicles, CCVs) which are destined for fusion with the early endosome. The clathrin lattice serves as a mechanical scaffold but is itself unable to bind directly to membrane components. Clathrin-associated adaptor protein (AP) complexes which can bind directly to both the clathrin lattice and to the lipid and protein components of membranes are considered to be the major clathrin adaptors contributing the CCV formation. AP-2 also serves as a cargo receptor to selectively sort the membrane proteins involved in receptor-mediated endocytosis. AP-2 seems to play a role in the recycling of synaptic vesicle membranes from the presynaptic surface. AP-2 recognizes Y-X-X-[FILMV] (Y-X-X-Phi) and [ED]-X-X-X-L-[LI] endocytosis signal motifs within the cytosolic tails of transmembrane cargo molecules. AP-2 may also play a role in maintaining normal post-endocytic trafficking through the ARF6-regulated, non-clathrin pathway. During long-term potentiation in hippocampal neurons, AP-2 is responsible for the endocytosis of ADAM10. The AP-2 mu subunit binds to transmembrane cargo proteins; it recognizes the Y-X-X-Phi motifs. The surface region interacting with to the Y-X-X-Phi motif is inaccessible in cytosolic AP-2, but becomes accessible through a conformational change following phosphorylation of AP-2 mu subunit at Thr-156 in membrane-associated AP-2. The membrane-specific phosphorylation event appears to involve assembled clathrin which activates the AP-2 mu kinase AAK1. Plays a role in endocytosis of frizzled family members upon Wnt signaling. The protein is AP-2 complex subunit mu (AP2M1) of Bos taurus (Bovine).